Here is a 351-residue protein sequence, read N- to C-terminus: Histidine protein kinase SaeS (351 aa).

Transmembrane regions (helical) follow at residues 9-29 (IIIG…IAYI) and 40-60 (TLTL…SIFI). Residues 61–114 (NPLIQKIKQFNIKTKQFANGNYASNDKTFNSPKEIYELNQSFNKMASEITQQMN) form the HAMP domain. Residues 129 to 348 (NLAHDLKTPL…TMTVTLHKLD (220 aa)) enclose the Histidine kinase domain. Phosphohistidine; by autocatalysis is present on histidine 132.

Post-translationally, autophosphorylated.

The protein resides in the cell membrane. The catalysed reaction is ATP + protein L-histidine = ADP + protein N-phospho-L-histidine.. Its function is as follows. Member of the two-component regulatory system SaeR/SaeS involved in the regulation of staphylococcal virulence factors in a strain-dependent fashion. Probably functions as a membrane-associated protein kinase that upon sensing the appropriate signal, autophosphorylates and in turn activates the cytosolic response regulator SaeR. SaeR/SaeS activates the expression of exoproteins involved in adhesion and invasion of host cells, including hemolysins (hla, hlb, hlgC), coa, DNase, spa and cell wall-associated proteins (emp, eap, fnbA, fnbB, efb). Represses the expression of type 5 capsular polysaccharide (cap operon). Also modulates the expression of several other genes. This chain is Histidine protein kinase SaeS (saeS), found in Staphylococcus aureus (strain Newman).